Consider the following 66-residue polypeptide: Protein translocase subunit SecE (66 aa).

Residues 29 to 49 (LIASTLVVVAAVFIFSLICLV) traverse the membrane as a helical segment.

The protein belongs to the SecE/SEC61-gamma family. Component of the Sec protein translocase complex. Heterotrimer consisting of SecY, SecE and SecG subunits. The heterotrimers can form oligomers, although 1 heterotrimer is thought to be able to translocate proteins. Interacts with the ribosome. Interacts with SecDF, and other proteins may be involved. Interacts with SecA.

Its subcellular location is the cell inner membrane. Functionally, essential subunit of the Sec protein translocation channel SecYEG. Clamps together the 2 halves of SecY. May contact the channel plug during translocation. The protein is Protein translocase subunit SecE of Rickettsia typhi (strain ATCC VR-144 / Wilmington).